The primary structure comprises 443 residues: MGFVSLGCPKALVDSEQIITQLRAEGYAISGTYDGADLVVVNTCGFIDEAVQESLDAIGEALTENGKVIVTGCLGAKKDAAGHDIVSSVHPKVLAVTGPHALGEVMQAVHTHLPKPHDPFTDLVPAAGIKLTPKHYAYLKISEGCNHRCSFCIIPSMRGDLVSRPVAEVMLEAENLFKAGVKELLVISQDTSAYGVDVKYRTGFWNGRPLKTRMTELVAALGELAAQYGAWVRLHYVYPYPHVDEIIPLMSQGHVLPYLDVPLQHAHPDVLKRMKRPANAEKTMDRIRAWREICPELTIRSTFIAGFPGETEAEFQTLLDFIAEAELDRVGCFAYSPVEGATANDLPGALPDEVREERRARFMEVAEEVSARRLQRKVGQTLRVLVDEVNQDGGIGRSSADAPEIDGLVYIAPPERHAQRYRAGEFVDVKITGADGHDLWGAV.

Positions 1-114 (MGFVSLGCPK…VMQAVHTHLP (114 aa)) constitute an MTTase N-terminal domain. Positions 8, 44, 73, 145, 149, and 152 each coordinate [4Fe-4S] cluster. One can recognise a Radical SAM core domain in the interval 131 to 372 (LTPKHYAYLK…MEVAEEVSAR (242 aa)). A TRAM domain is found at 375 to 443 (QRKVGQTLRV…ADGHDLWGAV (69 aa)).

The protein belongs to the methylthiotransferase family. RimO subfamily. Requires [4Fe-4S] cluster as cofactor.

Its subcellular location is the cytoplasm. It catalyses the reaction L-aspartate(89)-[ribosomal protein uS12]-hydrogen + (sulfur carrier)-SH + AH2 + 2 S-adenosyl-L-methionine = 3-methylsulfanyl-L-aspartate(89)-[ribosomal protein uS12]-hydrogen + (sulfur carrier)-H + 5'-deoxyadenosine + L-methionine + A + S-adenosyl-L-homocysteine + 2 H(+). In terms of biological role, catalyzes the methylthiolation of an aspartic acid residue of ribosomal protein uS12. The chain is Ribosomal protein uS12 methylthiotransferase RimO from Cupriavidus necator (strain ATCC 17699 / DSM 428 / KCTC 22496 / NCIMB 10442 / H16 / Stanier 337) (Ralstonia eutropha).